The sequence spans 30 residues: Trypsin inhibitor 1 (30 aa).

3 cysteine pairs are disulfide-bonded: Cys-4/Cys-21, Cys-11/Cys-23, and Cys-17/Cys-29.

The protein belongs to the protease inhibitor I7 (squash-type serine protease inhibitor) family.

Its subcellular location is the secreted. In terms of biological role, inhibits trypsin. The chain is Trypsin inhibitor 1 from Citrullus lanatus (Watermelon).